Here is a 284-residue protein sequence, read N- to C-terminus: MVLMIVSGRSGSGKSVALRALEDMGFYCVDNLPVVLLPDLAHSLAERNMSAAVSIDVRNMPESPEVFENALTSLPDSFSPQLLFLDADRNTLIRRYSDTRRLHPLSSKNLSLESAIDEENVLLEPLRSRADLIIDTSEMSVHELAEMLRTRLLGKRERELTMVFESFGFKHGIPIDADYVFDVRFLPNPHWDPKLRPMTGLDRPVAAFLDRHTEVHNFIYQTRSYLELWLPMLETNNRSYLTVAIGCTGGKHRSVYIAEQLADYFRSRGKNVQSRHRTLEKRRS.

Position 8–15 (8–15 (GRSGSGKS)) interacts with ATP. Residue 56-59 (DVRN) coordinates GTP. Residues 266–284 (RSRGKNVQSRHRTLEKRRS) are RNA-binding.

The protein belongs to the RapZ-like family. RapZ subfamily. As to quaternary structure, homotrimer.

In terms of biological role, modulates the synthesis of GlmS, by affecting the processing and stability of the regulatory small RNA GlmZ. When glucosamine-6-phosphate (GlcN6P) concentrations are high in the cell, RapZ binds GlmZ and targets it to cleavage by RNase E. Consequently, GlmZ is inactivated and unable to activate GlmS synthesis. Under low GlcN6P concentrations, RapZ is sequestered and inactivated by an other regulatory small RNA, GlmY, preventing GlmZ degradation and leading to synthesis of GlmS. The sequence is that of RNase adapter protein RapZ from Erwinia tasmaniensis (strain DSM 17950 / CFBP 7177 / CIP 109463 / NCPPB 4357 / Et1/99).